Consider the following 395-residue polypeptide: Succinyl-diaminopimelate desuccinylase (395 aa).

H74 provides a ligand contact to Zn(2+). D76 is a catalytic residue. A Zn(2+)-binding site is contributed by D107. E141 functions as the Proton acceptor in the catalytic mechanism. The Zn(2+) site is built by E142, E170, and H368.

The protein belongs to the peptidase M20A family. DapE subfamily. In terms of assembly, homodimer. Requires Zn(2+) as cofactor. Co(2+) serves as cofactor.

The enzyme catalyses N-succinyl-(2S,6S)-2,6-diaminopimelate + H2O = (2S,6S)-2,6-diaminopimelate + succinate. It functions in the pathway amino-acid biosynthesis; L-lysine biosynthesis via DAP pathway; LL-2,6-diaminopimelate from (S)-tetrahydrodipicolinate (succinylase route): step 3/3. In terms of biological role, catalyzes the hydrolysis of N-succinyl-L,L-diaminopimelic acid (SDAP), forming succinate and LL-2,6-diaminopimelate (DAP), an intermediate involved in the bacterial biosynthesis of lysine and meso-diaminopimelic acid, an essential component of bacterial cell walls. In Brucella canis (strain ATCC 23365 / NCTC 10854 / RM-666), this protein is Succinyl-diaminopimelate desuccinylase.